The following is a 216-amino-acid chain: Acetate CoA-transferase subunit beta (216 aa).

Glu-46 is an active-site residue.

It belongs to the 3-oxoacid CoA-transferase subunit B family. Heterotetramer composed of two alpha subunits (AtoD) and two beta subunits (AtoA).

The protein localises to the cytoplasm. The catalysed reaction is an acyl-CoA + acetate = a carboxylate + acetyl-CoA. It carries out the reaction acetoacetate + acetyl-CoA = acetoacetyl-CoA + acetate. It catalyses the reaction butanoate + acetyl-CoA = butanoyl-CoA + acetate. The enzyme catalyses acetoacetate + butanoyl-CoA = acetoacetyl-CoA + butanoate. Its pathway is lipid metabolism; short-chain fatty acid metabolism. With respect to regulation, inhibited by p-chloromercuribenzoate. In terms of biological role, coenzyme A transferase which is involved in short-chain fatty acid degradation and catalyzes the activation of short-chain fatty acids to their respective CoA thiolesters. During acetoacetate degradation, catalyzes the transfer of CoA from acetyl-CoA to acetoacetate by a mechanism involving a covalent enzyme-CoA compound as a reaction intermediate. Utilizes a variety of short chain acyl-CoA and carboxylic acid substrates but exhibits maximal activity with normal and 3-keto substrates. This is Acetate CoA-transferase subunit beta from Escherichia coli (strain K12).